Consider the following 878-residue polypeptide: Alanine--tRNA ligase (878 aa).

Residues His566, His570, Cys668, and His672 each coordinate Zn(2+).

Belongs to the class-II aminoacyl-tRNA synthetase family. It depends on Zn(2+) as a cofactor.

It is found in the cytoplasm. It catalyses the reaction tRNA(Ala) + L-alanine + ATP = L-alanyl-tRNA(Ala) + AMP + diphosphate. Functionally, catalyzes the attachment of alanine to tRNA(Ala) in a two-step reaction: alanine is first activated by ATP to form Ala-AMP and then transferred to the acceptor end of tRNA(Ala). Also edits incorrectly charged Ser-tRNA(Ala) and Gly-tRNA(Ala) via its editing domain. This is Alanine--tRNA ligase from Bacillus subtilis (strain 168).